Here is a 594-residue protein sequence, read N- to C-terminus: Cytoplasmic polyadenylation element-binding protein 1 (594 aa).

The tract at residues 1-33 is disordered; sequence MQHQVKACGDSKSTTRSLQGNRRSGAASLKKPS. Residues 11 to 22 show a composition bias toward polar residues; it reads SKSTTRSLQGNR. 2 consecutive RRM domains span residues 257–364 and 381–452; these read RKVF…PWRL and RTVF…HAET. Residues 519–560 form a disordered region; the sequence is TGDQTRILPRPPHHQSSHYSPRSHQMMNHDSMESSNQSRGNT. Polar residues predominate over residues 535 to 560; the sequence is SHYSPRSHQMMNHDSMESSNQSRGNT.

In terms of assembly, interacts with fbf-1.

In terms of biological role, cytoplasmic polyadenylation element binding protein that binds to and regulates the translation of specific mRNAs. Essential for progression through meiosis. Involved in spermatogenesis. The sequence is that of Cytoplasmic polyadenylation element-binding protein 1 (cpb-1) from Caenorhabditis remanei (Caenorhabditis vulgaris).